We begin with the raw amino-acid sequence, 272 residues long: Shikimate dehydrogenase (NADP(+)) (272 aa).

Shikimate contacts are provided by residues 14–16 and Thr-61; that span reads SKS. Catalysis depends on Lys-65, which acts as the Proton acceptor. Glu-77 is an NADP(+) binding site. Shikimate-binding residues include Asn-86 and Asp-102. Residues 126–130, 149–154, and Met-213 contribute to the NADP(+) site; these read GAGGA and NRTFSR. Tyr-215 is a binding site for shikimate. Residue Gly-237 participates in NADP(+) binding.

The protein belongs to the shikimate dehydrogenase family. In terms of assembly, homodimer.

The catalysed reaction is shikimate + NADP(+) = 3-dehydroshikimate + NADPH + H(+). It functions in the pathway metabolic intermediate biosynthesis; chorismate biosynthesis; chorismate from D-erythrose 4-phosphate and phosphoenolpyruvate: step 4/7. Its function is as follows. Involved in the biosynthesis of the chorismate, which leads to the biosynthesis of aromatic amino acids. Catalyzes the reversible NADPH linked reduction of 3-dehydroshikimate (DHSA) to yield shikimate (SA). The chain is Shikimate dehydrogenase (NADP(+)) from Photorhabdus laumondii subsp. laumondii (strain DSM 15139 / CIP 105565 / TT01) (Photorhabdus luminescens subsp. laumondii).